The chain runs to 292 residues: 3-methyl-2-oxobutanoate hydroxymethyltransferase 2 (292 aa).

Residues Asp-52 and Asp-91 each coordinate Mg(2+). 3-methyl-2-oxobutanoate contacts are provided by residues 52-53 (DS), Asp-91, and Lys-120. Residue Glu-122 participates in Mg(2+) binding. Glu-189 serves as the catalytic Proton acceptor.

Belongs to the PanB family. As to quaternary structure, homodecamer; pentamer of dimers. Mg(2+) serves as cofactor.

The protein localises to the cytoplasm. The catalysed reaction is 3-methyl-2-oxobutanoate + (6R)-5,10-methylene-5,6,7,8-tetrahydrofolate + H2O = 2-dehydropantoate + (6S)-5,6,7,8-tetrahydrofolate. The protein operates within cofactor biosynthesis; (R)-pantothenate biosynthesis; (R)-pantoate from 3-methyl-2-oxobutanoate: step 1/2. Catalyzes the reversible reaction in which hydroxymethyl group from 5,10-methylenetetrahydrofolate is transferred onto alpha-ketoisovalerate to form ketopantoate. The chain is 3-methyl-2-oxobutanoate hydroxymethyltransferase 2 from Bradyrhizobium diazoefficiens (strain JCM 10833 / BCRC 13528 / IAM 13628 / NBRC 14792 / USDA 110).